Consider the following 299-residue polypeptide: 4-diphosphocytidyl-2-C-methyl-D-erythritol kinase (299 aa).

Lysine 16 is an active-site residue. 97–107 contributes to the ATP binding site; it reads PVASGIGGGSA. Aspartate 140 is an active-site residue.

It belongs to the GHMP kinase family. IspE subfamily.

It carries out the reaction 4-CDP-2-C-methyl-D-erythritol + ATP = 4-CDP-2-C-methyl-D-erythritol 2-phosphate + ADP + H(+). It functions in the pathway isoprenoid biosynthesis; isopentenyl diphosphate biosynthesis via DXP pathway; isopentenyl diphosphate from 1-deoxy-D-xylulose 5-phosphate: step 3/6. Its function is as follows. Catalyzes the phosphorylation of the position 2 hydroxy group of 4-diphosphocytidyl-2C-methyl-D-erythritol. The protein is 4-diphosphocytidyl-2-C-methyl-D-erythritol kinase of Roseobacter denitrificans (strain ATCC 33942 / OCh 114) (Erythrobacter sp. (strain OCh 114)).